A 468-amino-acid chain; its full sequence is Pentatricopeptide repeat-containing protein At5g46680 (468 aa).

PPR repeat units follow at residues 12–46 (STKL…GVLP), 47–81 (DVIT…GIEP), 82–116 (DVTT…GLSP), 117–152 (DMWS…GLVP), 153–183 (GIDT…LKSR), 187–221 (ELMT…GYTP), 222–256 (NAVT…GYTF), 257–291 (DGFA…GTRS), 293–327 (DIVS…GLKP), 328–362 (DDYT…GMQP), 363–393 (SVVT…MEVR), and 394–428 (DEFT…GMKI).

This sequence belongs to the PPR family. P subfamily.

In Arabidopsis thaliana (Mouse-ear cress), this protein is Pentatricopeptide repeat-containing protein At5g46680.